Reading from the N-terminus, the 44-residue chain is Antibacterial protein 2 homolog (44 aa).

This sequence belongs to the staphylococcal hemolytic protein family.

It localises to the secreted. Functionally, has hemolytic activity and also inhibits the growth of gonococci. In Staphylococcus haemolyticus (strain JCSC1435), this protein is Antibacterial protein 2 homolog.